The chain runs to 604 residues: Aspartate--tRNA(Asp/Asn) ligase (604 aa).

E174 contacts L-aspartate. Positions 198 to 201 are aspartate; sequence QLYK. An L-aspartate-binding site is contributed by R220. ATP contacts are provided by residues 220-222 and Q229; that span reads RDE. H460 is a binding site for L-aspartate. E494 is an ATP binding site. R501 lines the L-aspartate pocket. Position 546-549 (546-549) interacts with ATP; the sequence is GLDR.

The protein belongs to the class-II aminoacyl-tRNA synthetase family. Type 1 subfamily. In terms of assembly, homodimer.

It is found in the cytoplasm. It catalyses the reaction tRNA(Asx) + L-aspartate + ATP = L-aspartyl-tRNA(Asx) + AMP + diphosphate. Its function is as follows. Aspartyl-tRNA synthetase with relaxed tRNA specificity since it is able to aspartylate not only its cognate tRNA(Asp) but also tRNA(Asn). Reaction proceeds in two steps: L-aspartate is first activated by ATP to form Asp-AMP and then transferred to the acceptor end of tRNA(Asp/Asn). The sequence is that of Aspartate--tRNA(Asp/Asn) ligase from Paracidovorax citrulli (strain AAC00-1) (Acidovorax citrulli).